We begin with the raw amino-acid sequence, 172 residues long: Endoribonuclease YbeY (172 aa).

Positions 137, 141, and 147 each coordinate Zn(2+).

Belongs to the endoribonuclease YbeY family. Zn(2+) serves as cofactor.

Its subcellular location is the cytoplasm. Single strand-specific metallo-endoribonuclease involved in late-stage 70S ribosome quality control and in maturation of the 3' terminus of the 16S rRNA. The sequence is that of Endoribonuclease YbeY from Dehalococcoides mccartyi (strain ATCC BAA-2266 / KCTC 15142 / 195) (Dehalococcoides ethenogenes (strain 195)).